Reading from the N-terminus, the 217-residue chain is 3,4-dihydroxy-2-butanone 4-phosphate synthase (217 aa).

Residues 37–38 (RE), D42, 150–154 (RRGHT), and E174 each bind D-ribulose 5-phosphate. E38 contributes to the Mg(2+) binding site. H153 is a Mg(2+) binding site.

Belongs to the DHBP synthase family. In terms of assembly, homodimer. Requires Mg(2+) as cofactor. It depends on Mn(2+) as a cofactor.

The enzyme catalyses D-ribulose 5-phosphate = (2S)-2-hydroxy-3-oxobutyl phosphate + formate + H(+). The protein operates within cofactor biosynthesis; riboflavin biosynthesis; 2-hydroxy-3-oxobutyl phosphate from D-ribulose 5-phosphate: step 1/1. Functionally, catalyzes the conversion of D-ribulose 5-phosphate to formate and 3,4-dihydroxy-2-butanone 4-phosphate. This is 3,4-dihydroxy-2-butanone 4-phosphate synthase from Shewanella woodyi (strain ATCC 51908 / MS32).